We begin with the raw amino-acid sequence, 454 residues long: Transcription factor efuD (454 aa).

The region spanning 4–111 (AKELIRITAR…NYHRAIDSIK (108 aa)) is the HTH TFE/IIEalpha-type domain. The interval 327-454 (LRTDDDGAMD…DEDELEFEDI (128 aa)) is disordered. The segment covering 353–372 (DQDEEEEEEDDDDDEFEDVD) has biased composition (acidic residues). The segment covering 387 to 401 (SVSTPATSAQVSSTA) has biased composition (polar residues). Residues 423 to 437 (APAAAASSQAAAAES) show a composition bias toward low complexity. The span at 442–454 (SDEDEDELEFEDI) shows a compositional bias: acidic residues.

It belongs to the TFIIE alpha subunit family.

The protein localises to the nucleus. Functionally, transcription factor; part of the gene cluster that mediates the biosynthesis of enfumafungin, a glycosylated fernene-type triterpenoid with potent antifungal activity, mediated by its interaction with beta-1,3-glucan synthase and the fungal cell wall. Is possibly responsible for the transcription regulation of one or more genes within the gene cluster. This chain is Transcription factor efuD, found in Hormonema carpetanum.